Reading from the N-terminus, the 256-residue chain is GCN5-related N-acetyltransferase 10, chloroplastic (256 aa).

Residues methionine 1–arginine 41 constitute a chloroplast transit peptide. Positions phenylalanine 106–serine 256 constitute an N-acetyltransferase domain. Acetyl-CoA contacts are provided by residues leucine 178 to valine 180, arginine 186 to serine 191, aspartate 217 to alanine 219, and tyrosine 224. Residue tyrosine 224 is the Proton donor of the active site.

Belongs to the acetyltransferase family. GNAT subfamily. As to quaternary structure, oligomer. Post-translationally, autoacetylated. In terms of tissue distribution, expressed in green tissues.

It is found in the plastid. It localises to the chloroplast. It carries out the reaction an N-terminal L-alpha-aminoacyl-[protein] + acetyl-CoA = N-terminal N(alpha)-acetyl-L-alpha-aminoacyl-[protein] + CoA + H(+). The catalysed reaction is L-lysyl-[protein] + acetyl-CoA = N(6)-acetyl-L-lysyl-[protein] + CoA + H(+). The enzyme catalyses N-terminal L-methionyl-[protein] + acetyl-CoA = N-terminal N(alpha)-acetyl-L-methionyl-[protein] + CoA + H(+). It catalyses the reaction N-terminal L-seryl-[protein] + acetyl-CoA = N-terminal N(alpha)-acetyl-L-seryl-[protein] + CoA + H(+). It carries out the reaction N-terminal L-valyl-[protein] + acetyl-CoA = N-terminal N(alpha)-acetyl-L-valyl-[protein] + CoA + H(+). The catalysed reaction is N-terminal L-threonyl-[protein] + acetyl-CoA = N-terminal N(alpha)-acetyl-L-threonyl-[protein] + CoA + H(+). The enzyme catalyses N-terminal L-alanyl-[protein] + acetyl-CoA = N-terminal N(alpha)-acetyl-L-alanyl-[protein] + CoA + H(+). It catalyses the reaction N-terminal glycyl-[protein] + acetyl-CoA = N-terminal N(alpha)-acetylglycyl-[protein] + CoA + H(+). Functionally, protein acetyltransferase with dual specificity triggering both N-alpha-acetylation (NTA), with a preference for leucine, methionine, serine, valine and to a lower extent threonine and alanine as substrates (can also use glycine), and epsilon-lysine acetylation (KA) of several plastid proteins. The sequence is that of GCN5-related N-acetyltransferase 10, chloroplastic from Arabidopsis thaliana (Mouse-ear cress).